The primary structure comprises 246 residues: DNA repair protein RecO (246 aa).

Belongs to the RecO family.

Involved in DNA repair and RecF pathway recombination. The polypeptide is DNA repair protein RecO (Alkaliphilus metalliredigens (strain QYMF)).